Consider the following 90-residue polypeptide: Putative regulatory protein cce_4590 (90 aa).

This sequence belongs to the RemA family.

This Crocosphaera subtropica (strain ATCC 51142 / BH68) (Cyanothece sp. (strain ATCC 51142)) protein is Putative regulatory protein cce_4590.